Consider the following 1341-residue polypeptide: DNA-directed RNA polymerase subunit beta (1341 aa).

The protein belongs to the RNA polymerase beta chain family. The RNAP catalytic core consists of 2 alpha, 1 beta, 1 beta' and 1 omega subunit. When a sigma factor is associated with the core the holoenzyme is formed, which can initiate transcription.

It catalyses the reaction RNA(n) + a ribonucleoside 5'-triphosphate = RNA(n+1) + diphosphate. Functionally, DNA-dependent RNA polymerase catalyzes the transcription of DNA into RNA using the four ribonucleoside triphosphates as substrates. This chain is DNA-directed RNA polymerase subunit beta, found in Vibrio cholerae serotype O1 (strain ATCC 39541 / Classical Ogawa 395 / O395).